Reading from the N-terminus, the 213-residue chain is FMN-dependent NADH:quinone oxidoreductase 3 (213 aa).

FMN-binding positions include Ser-10, 16-18 (SVS), and 96-99 (MYNF).

It belongs to the azoreductase type 1 family. In terms of assembly, homodimer. It depends on FMN as a cofactor.

The enzyme catalyses 2 a quinone + NADH + H(+) = 2 a 1,4-benzosemiquinone + NAD(+). It carries out the reaction N,N-dimethyl-1,4-phenylenediamine + anthranilate + 2 NAD(+) = 2-(4-dimethylaminophenyl)diazenylbenzoate + 2 NADH + 2 H(+). Functionally, quinone reductase that provides resistance to thiol-specific stress caused by electrophilic quinones. Shows a preference for naphthoquinones such as plumbagin. Also exhibits azoreductase activity. Catalyzes the reductive cleavage of the azo bond in aromatic azo compounds to the corresponding amines. Preferred substrates are methyl red, amaranth and p-aminoazobenzene sulfonamide (PAABSA). The chain is FMN-dependent NADH:quinone oxidoreductase 3 from Pseudomonas aeruginosa (strain ATCC 15692 / DSM 22644 / CIP 104116 / JCM 14847 / LMG 12228 / 1C / PRS 101 / PAO1).